The chain runs to 101 residues: Small ribosomal subunit protein uS14 (101 aa).

The tract at residues Ala-44–Val-74 is disordered. Residues Arg-61–Pro-70 show a composition bias toward basic and acidic residues.

This sequence belongs to the universal ribosomal protein uS14 family. In terms of assembly, part of the 30S ribosomal subunit. Contacts proteins S3 and S10.

Its function is as follows. Binds 16S rRNA, required for the assembly of 30S particles and may also be responsible for determining the conformation of the 16S rRNA at the A site. This is Small ribosomal subunit protein uS14 from Cutibacterium acnes (strain DSM 16379 / KPA171202) (Propionibacterium acnes).